The following is a 308-amino-acid chain: Transaldolase (308 aa).

Residue Lys125 is the Schiff-base intermediate with substrate of the active site.

It belongs to the transaldolase family. Type 1 subfamily. As to quaternary structure, homodimer.

It localises to the cytoplasm. The enzyme catalyses D-sedoheptulose 7-phosphate + D-glyceraldehyde 3-phosphate = D-erythrose 4-phosphate + beta-D-fructose 6-phosphate. Its pathway is carbohydrate degradation; pentose phosphate pathway; D-glyceraldehyde 3-phosphate and beta-D-fructose 6-phosphate from D-ribose 5-phosphate and D-xylulose 5-phosphate (non-oxidative stage): step 2/3. Functionally, transaldolase is important for the balance of metabolites in the pentose-phosphate pathway. The sequence is that of Transaldolase from Pseudomonas savastanoi pv. phaseolicola (strain 1448A / Race 6) (Pseudomonas syringae pv. phaseolicola (strain 1448A / Race 6)).